Consider the following 422-residue polypeptide: 5'-deoxyadenosine deaminase (422 aa).

Zn(2+) contacts are provided by histidine 57 and histidine 59. Substrate contacts are provided by glutamate 86 and histidine 178. Residue histidine 205 participates in Zn(2+) binding. Substrate is bound by residues glutamate 208 and aspartate 294. Residue aspartate 294 participates in Zn(2+) binding.

This sequence belongs to the metallo-dependent hydrolases superfamily. MTA/SAH deaminase family. Homotetramer. The cofactor is Zn(2+).

The catalysed reaction is 5'-deoxyadenosine + H2O + H(+) = 5'-deoxyinosine + NH4(+). The enzyme catalyses S-adenosyl-L-homocysteine + H2O + H(+) = S-inosyl-L-homocysteine + NH4(+). It carries out the reaction S-methyl-5'-thioadenosine + H2O + H(+) = S-methyl-5'-thioinosine + NH4(+). It catalyses the reaction adenosine + H2O + H(+) = inosine + NH4(+). Its pathway is amino-acid biosynthesis; S-adenosyl-L-methionine biosynthesis. In terms of biological role, catalyzes the deamination of three SAM-derived enzymatic products, namely 5'-deoxyadenosine, S-adenosyl-L-homocysteine, and 5'-methylthioadenosine, to produce the inosine analogs. Can also deaminate adenosine. The preferred substrate for this enzyme is 5'-deoxyadenosine, but all these substrates are efficiently deaminated. Likely functions in a S-adenosyl-L-methionine (SAM) recycling pathway from S-adenosyl-L-homocysteine (SAH) produced from SAM-dependent methylation reactions. May also be involved in the recycling of 5'-deoxyadenosine, whereupon the 5'-deoxyribose moiety of 5'-deoxyinosine is further metabolized to deoxyhexoses used for the biosynthesis of aromatic amino acids in methanogens. The sequence is that of 5'-deoxyadenosine deaminase from Methanococcus maripaludis (strain C6 / ATCC BAA-1332).